The sequence spans 218 residues: Cytidylate kinase (218 aa).

Position 21–29 (21–29 (GPAASGKGT)) interacts with ATP.

It belongs to the cytidylate kinase family. Type 1 subfamily.

The protein resides in the cytoplasm. The enzyme catalyses CMP + ATP = CDP + ADP. It catalyses the reaction dCMP + ATP = dCDP + ADP. The polypeptide is Cytidylate kinase (Rickettsia canadensis (strain McKiel)).